Reading from the N-terminus, the 123-residue chain is Transmembrane protein 80 (123 aa).

A run of 4 helical transmembrane segments spans residues 2 to 22, 35 to 55, 68 to 88, and 102 to 122; these read LFHL…LMIV, LALD…QLYL, LAAS…FLLW, and VLLV…ADFI.

It localises to the membrane. Its subcellular location is the cell projection. It is found in the cilium. The protein is Transmembrane protein 80 (Tmem80) of Mus musculus (Mouse).